Here is a 907-residue protein sequence, read N- to C-terminus: Protein translocase subunit SecA (907 aa).

Residues glutamine 87, 105-109 (GEGKT), and aspartate 513 each bind ATP. Positions 841–853 (EAQRRAQAEEAAR) are enriched in basic and acidic residues. A disordered region spans residues 841–907 (EAQRRAQAEE…KYKQCHGQIN (67 aa)). The segment covering 854–865 (RAQAQHASAQSQ) has biased composition (low complexity). The span at 872 to 887 (EGHHQPVVRDERKVGR) shows a compositional bias: basic and acidic residues. The Zn(2+) site is built by cysteine 891, cysteine 893, cysteine 902, and histidine 903.

The protein belongs to the SecA family. As to quaternary structure, monomer and homodimer. Part of the essential Sec protein translocation apparatus which comprises SecA, SecYEG and auxiliary proteins SecDF-YajC and YidC. The cofactor is Zn(2+).

It is found in the cell inner membrane. Its subcellular location is the cytoplasm. The catalysed reaction is ATP + H2O + cellular proteinSide 1 = ADP + phosphate + cellular proteinSide 2.. Functionally, part of the Sec protein translocase complex. Interacts with the SecYEG preprotein conducting channel. Has a central role in coupling the hydrolysis of ATP to the transfer of proteins into and across the cell membrane, serving both as a receptor for the preprotein-SecB complex and as an ATP-driven molecular motor driving the stepwise translocation of polypeptide chains across the membrane. This is Protein translocase subunit SecA from Vibrio vulnificus (strain CMCP6).